A 369-amino-acid chain; its full sequence is Peptide chain release factor 2 (369 aa).

An N5-methylglutamine modification is found at glutamine 252.

Belongs to the prokaryotic/mitochondrial release factor family. Methylated by PrmC. Methylation increases the termination efficiency of RF2.

The protein localises to the cytoplasm. Its function is as follows. Peptide chain release factor 2 directs the termination of translation in response to the peptide chain termination codons UGA and UAA. This is Peptide chain release factor 2 from Staphylococcus aureus (strain bovine RF122 / ET3-1).